A 329-amino-acid chain; its full sequence is Beta-ketoacyl-[acyl-carrier-protein] synthase III (329 aa).

Active-site residues include cysteine 113 and histidine 255. The ACP-binding stretch occupies residues 256 to 260 (QANQR). The active site involves asparagine 285.

It belongs to the thiolase-like superfamily. FabH family. In terms of assembly, homodimer.

The protein resides in the cytoplasm. The catalysed reaction is malonyl-[ACP] + acetyl-CoA + H(+) = 3-oxobutanoyl-[ACP] + CO2 + CoA. The protein operates within lipid metabolism; fatty acid biosynthesis. Catalyzes the condensation reaction of fatty acid synthesis by the addition to an acyl acceptor of two carbons from malonyl-ACP. Catalyzes the first condensation reaction which initiates fatty acid synthesis and may therefore play a role in governing the total rate of fatty acid production. Possesses both acetoacetyl-ACP synthase and acetyl transacylase activities. Its substrate specificity determines the biosynthesis of branched-chain and/or straight-chain of fatty acids. The protein is Beta-ketoacyl-[acyl-carrier-protein] synthase III of Chlorobium phaeobacteroides (strain DSM 266 / SMG 266 / 2430).